Consider the following 358-residue polypeptide: Bi-functional coumaroyl CoA and feruloyl CoA ortho-hydroxylase F6H2-1-1 (358 aa).

The Fe2OG dioxygenase domain maps to 207-308 (GSRRININYY…RISVPVFVNP (102 aa)). Tyr216 lines the 2-oxoglutarate pocket. 3 residues coordinate Fe cation: His231, Asp233, and His289. 2-oxoglutarate contacts are provided by Arg299 and Ser301.

The protein belongs to the iron/ascorbate-dependent oxidoreductase family. Requires L-ascorbate as cofactor. Fe(2+) is required as a cofactor. As to expression, mostly expressed in underground stems and stems, and, at low levels, in tubers, leaves and petioles.

The catalysed reaction is (E)-4-coumaroyl-CoA + 2-oxoglutarate + O2 = (E)-2,4-dihydroxycinnamoyl-CoA + succinate + CO2. It carries out the reaction (E)-feruloyl-CoA + 2-oxoglutarate + O2 = (E)-6-hydroxyferuloyl-CoA + succinate + CO2. It participates in phenylpropanoid metabolism. Functionally, 2-oxoglutarate (OG)- and Fe(II)-dependent dioxygenase (2OGD) involved in scopoletin and umbelliferone biosynthesis. Converts feruloyl CoA into 6'-hydroxyferuloyl CoA, and p-coumaroyl CoA into 2,4-dihydroxycinnamoyl-CoA, but has no activity with caffeoyl-CoA. The sequence is that of Bi-functional coumaroyl CoA and feruloyl CoA ortho-hydroxylase F6H2-1-1 from Ipomoea batatas (Sweet potato).